A 291-amino-acid polypeptide reads, in one-letter code: Aspartate carbamoyltransferase catalytic subunit (291 aa).

Residues Arg-47 and Thr-48 each coordinate carbamoyl phosphate. Lys-75 lines the L-aspartate pocket. Carbamoyl phosphate-binding residues include Arg-97, His-126, and Gln-129. Residues Arg-159 and Arg-213 each coordinate L-aspartate. 2 residues coordinate carbamoyl phosphate: Gly-251 and Pro-252.

Belongs to the aspartate/ornithine carbamoyltransferase superfamily. ATCase family. In terms of assembly, heterododecamer (2C3:3R2) of six catalytic PyrB chains organized as two trimers (C3), and six regulatory PyrI chains organized as three dimers (R2).

The enzyme catalyses carbamoyl phosphate + L-aspartate = N-carbamoyl-L-aspartate + phosphate + H(+). Its pathway is pyrimidine metabolism; UMP biosynthesis via de novo pathway; (S)-dihydroorotate from bicarbonate: step 2/3. Functionally, catalyzes the condensation of carbamoyl phosphate and aspartate to form carbamoyl aspartate and inorganic phosphate, the committed step in the de novo pyrimidine nucleotide biosynthesis pathway. This Aquifex aeolicus (strain VF5) protein is Aspartate carbamoyltransferase catalytic subunit.